Reading from the N-terminus, the 1033-residue chain is MAKVRVYELAKEFGVESKVVMAKLQELGEFVRSASSTIEAPVVRKLTDAFQQGGGNGRSAGRPAAPKKAAPRPSAPSPAQAGPSQAAPAAGDRAAAPRPSAAPKAPAAQQPAAPSAPAPAPSQGPRPTPGPKPAPRPAPAAPEFTAPPAAPAAPSTPAPAPSGPKPGGARPGAPKPGGARPSGPGQDRGQQGGQGRPGGQRPGAPAQRPGGRPGGPRPGNNPFTSGGNAGMARPSAPRPQGGPRPGGPGGAPGGGPRPQGPGGQGGGPRPQAPGGNRPSPGSMPRPQGGGAGPRPGGGPRPNPGMMPQRPAAGPRPGPGGGGRGPGGAGRPGGGGGRPGGGGFAGRPGGGGGGRPGGGGGFAGRPGGGGGFGGGGGRPGFGGRPGGPGGRGGTQGAFGRPGGPARRGRKSKRQRRQEYEAMQAPSVGGVMLPRGNGETIRLSRGASLTDFAEKINANPASLVAVMMNLGEMVTATQSVSDETLHLLAGEMNYTVQIVSPEEEDRELLESFDLEFGEDEGSEEDLVVRPPVVTVMGHVDHGKTRLLDAIRKTNVIAGEAGGITQHIGAYQVATEVNDEERKITFIDTPGHEAFTAMRARGARSTDIAILVVAANDGVMPQTVEALNHAKAAEVPIVVAVNKIDVEGADPTKVRGQLTEYGLVAEEYGGDTMFVDISAKQGLHIDSLLEAVVLTADASLDLRANPVQDAQGISIESRLDRGRGAVATVLVQRGTLRVGDTMVVGDAYGRVRAMLDDNGNNVAEAGPSTPVQVLGLTNVPGAGDNFIVVEEDRTARQIAEKRAARERNAAFAKRTRRVSLEDLDKVLKAGEVQQLNLIIKGDASGSVEALESSLLQLDVGEEVDIRVLHRGVGAVTESDIDLAMGSDAIVIGFNVRAAGRAAQMAEREGVDVRYYSVIYQAIEEIEAALKGMLKPEYEEVELGTAEIREVFRSSKLGNIAGVLIRSGEVKRNTKARLLRDGKVIAENLNIEGLRRFKDDVTEIREGFEGGINLGNFNDIKVDDVIATYEMREKPRV.

Residues 49-432 (AFQQGGGNGR…APSVGGVMLP (384 aa)) form a disordered region. The span at 59-113 (SAGRPAAPKKAAPRPSAPSPAQAGPSQAAPAAGDRAAAPRPSAAPKAPAAQQPAA) shows a compositional bias: low complexity. 2 stretches are compositionally biased toward pro residues: residues 114-140 (PSAPAPAPSQGPRPTPGPKPAPRPAPA) and 148-164 (PAAPAAPSTPAPAPSGP). The span at 171–189 (PGAPKPGGARPSGPGQDRG) shows a compositional bias: low complexity. Gly residues predominate over residues 190 to 201 (QQGGQGRPGGQR). The segment covering 236-246 (APRPQGGPRPG) has biased composition (pro residues). The segment covering 247–268 (GPGGAPGGGPRPQGPGGQGGGP) has biased composition (gly residues). The span at 305 to 314 (MMPQRPAAGP) shows a compositional bias: low complexity. Positions 318–401 (PGGGGRGPGG…GTQGAFGRPG (84 aa)) are enriched in gly residues. A compositionally biased stretch (basic residues) spans 405-414 (RRGRKSKRQR). The region spanning 526–698 (VRPPVVTVMG…VVLTADASLD (173 aa)) is the tr-type G domain. The G1 stretch occupies residues 535–542 (GHVDHGKT). A GTP-binding site is contributed by 535–542 (GHVDHGKT). The G2 stretch occupies residues 560-564 (GITQH). The interval 585–588 (DTPG) is G3. GTP-binding positions include 585–589 (DTPGH) and 639–642 (NKID). Positions 639–642 (NKID) are G4. The G5 stretch occupies residues 675–677 (SAK).

It belongs to the TRAFAC class translation factor GTPase superfamily. Classic translation factor GTPase family. IF-2 subfamily.

The protein resides in the cytoplasm. Functionally, one of the essential components for the initiation of protein synthesis. Protects formylmethionyl-tRNA from spontaneous hydrolysis and promotes its binding to the 30S ribosomal subunits. Also involved in the hydrolysis of GTP during the formation of the 70S ribosomal complex. In Streptomyces coelicolor (strain ATCC BAA-471 / A3(2) / M145), this protein is Translation initiation factor IF-2.